Reading from the N-terminus, the 292-residue chain is NAD kinase (292 aa).

Asp-73 functions as the Proton acceptor in the catalytic mechanism. NAD(+)-binding positions include Asp-73 to Gly-74, Asn-147 to Glu-148, His-158, Arg-175, Asp-177, Thr-188 to Ser-193, and Gln-247.

It belongs to the NAD kinase family. A divalent metal cation serves as cofactor.

Its subcellular location is the cytoplasm. It catalyses the reaction NAD(+) + ATP = ADP + NADP(+) + H(+). Its function is as follows. Involved in the regulation of the intracellular balance of NAD and NADP, and is a key enzyme in the biosynthesis of NADP. Catalyzes specifically the phosphorylation on 2'-hydroxyl of the adenosine moiety of NAD to yield NADP. The protein is NAD kinase of Escherichia coli (strain SMS-3-5 / SECEC).